Reading from the N-terminus, the 364-residue chain is Lipoyl synthase, mitochondrial (364 aa).

A disordered region spans residues 34 to 53 (PNFQDFIQNSDNSKDDFENY). C99, C104, C110, C130, C134, C137, and S345 together coordinate [4Fe-4S] cluster. One can recognise a Radical SAM core domain in the interval 115 to 334 (EHGTQTATIM…EQRGNELGFL (220 aa)).

This sequence belongs to the radical SAM superfamily. Lipoyl synthase family. It depends on [4Fe-4S] cluster as a cofactor.

The protein localises to the mitochondrion. It carries out the reaction [[Fe-S] cluster scaffold protein carrying a second [4Fe-4S](2+) cluster] + N(6)-octanoyl-L-lysyl-[protein] + 2 oxidized [2Fe-2S]-[ferredoxin] + 2 S-adenosyl-L-methionine + 4 H(+) = [[Fe-S] cluster scaffold protein] + N(6)-[(R)-dihydrolipoyl]-L-lysyl-[protein] + 4 Fe(3+) + 2 hydrogen sulfide + 2 5'-deoxyadenosine + 2 L-methionine + 2 reduced [2Fe-2S]-[ferredoxin]. It participates in protein modification; protein lipoylation via endogenous pathway; protein N(6)-(lipoyl)lysine from octanoyl-[acyl-carrier-protein]: step 2/2. Catalyzes the radical-mediated insertion of two sulfur atoms into the C-6 and C-8 positions of the octanoyl moiety bound to the lipoyl domains of lipoate-dependent enzymes, thereby converting the octanoylated domains into lipoylated derivatives. The protein is Lipoyl synthase, mitochondrial of Drosophila grimshawi (Hawaiian fruit fly).